A 505-amino-acid polypeptide reads, in one-letter code: Putative thymidine phosphorylase (505 aa).

It belongs to the thymidine/pyrimidine-nucleoside phosphorylase family. Type 2 subfamily.

The catalysed reaction is thymidine + phosphate = 2-deoxy-alpha-D-ribose 1-phosphate + thymine. The sequence is that of Putative thymidine phosphorylase from Tolumonas auensis (strain DSM 9187 / NBRC 110442 / TA 4).